Consider the following 579-residue polypeptide: 2-succinyl-5-enolpyruvyl-6-hydroxy-3-cyclohexene-1-carboxylate synthase (579 aa).

It belongs to the TPP enzyme family. MenD subfamily. In terms of assembly, homodimer. Requires Mg(2+) as cofactor. Mn(2+) serves as cofactor. It depends on thiamine diphosphate as a cofactor.

It catalyses the reaction isochorismate + 2-oxoglutarate + H(+) = 5-enolpyruvoyl-6-hydroxy-2-succinyl-cyclohex-3-ene-1-carboxylate + CO2. Its pathway is quinol/quinone metabolism; 1,4-dihydroxy-2-naphthoate biosynthesis; 1,4-dihydroxy-2-naphthoate from chorismate: step 2/7. It functions in the pathway quinol/quinone metabolism; menaquinone biosynthesis. Catalyzes the thiamine diphosphate-dependent decarboxylation of 2-oxoglutarate and the subsequent addition of the resulting succinic semialdehyde-thiamine pyrophosphate anion to isochorismate to yield 2-succinyl-5-enolpyruvyl-6-hydroxy-3-cyclohexene-1-carboxylate (SEPHCHC). The sequence is that of 2-succinyl-5-enolpyruvyl-6-hydroxy-3-cyclohexene-1-carboxylate synthase from Shewanella frigidimarina (strain NCIMB 400).